We begin with the raw amino-acid sequence, 353 residues long: Melanin-concentrating hormone receptor 1 (353 aa).

Residues 1–26 (MDLQTSLLSTGPNASNISDGQDNLTL) form a disordered region. Residues 1–45 (MDLQTSLLSTGPNASNISDGQDNLTLPGSPPRTGSVSYINIIMPS) lie on the Extracellular side of the membrane. Residues Asn-13, Asn-16, and Asn-23 are each glycosylated (N-linked (GlcNAc...) asparagine). A helical membrane pass occupies residues 46-66 (VFGTICLLGIVGNSTVIFAVV). Residues 67 to 79 (KKSKLHWCSNVPD) lie on the Cytoplasmic side of the membrane. Residues 80–100 (IFIINLSVVDLLFLLGMPFMI) traverse the membrane as a helical segment. Residues 101–116 (HQLMGNGVWHFGETMC) are Extracellular-facing. Residues Cys-116 and Cys-194 are joined by a disulfide bond. A helical transmembrane segment spans residues 117 to 139 (TLITAMDANSQFTSTYILTAMTI). Topologically, residues 140 to 161 (DRYLATVHPISSTKFRKPSMAT) are cytoplasmic. A helical transmembrane segment spans residues 162–182 (LVICLLWALSFISITPVWLYA). Over 183–204 (RLIPFPGGAVGCGIRLPNPDTD) the chain is Extracellular. The helical transmembrane segment at 205 to 225 (LYWFTLYQFFLAFALPFVVIT) threads the bilayer. Topologically, residues 226–256 (AAYVKILQRMTSSVAPASQRSIRLRTKRVTR) are cytoplasmic. The helical transmembrane segment at 257–277 (TAIAICLVFFVCWAPYYVLQL) threads the bilayer. Residues 278 to 294 (TQLSISRPTLTFVYLYN) lie on the Extracellular side of the membrane. A helical transmembrane segment spans residues 295–315 (AAISLGYANSCLNPFVYIVLC). Topologically, residues 316 to 353 (ETFRKRLVLSVKPAAQGQLRTVSNAQTADEERTESKGT) are cytoplasmic.

Belongs to the G-protein coupled receptor 1 family. Interacts with NCDN. High level in the brain, moderate amounts in the eye and skeletal muscle, and small amounts in tongue and pituitary.

It localises to the cell membrane. In terms of biological role, receptor for melanin-concentrating hormone, coupled to G proteins that inhibit adenylyl cyclase. This is Melanin-concentrating hormone receptor 1 from Rattus norvegicus (Rat).